The chain runs to 402 residues: Homoserine O-acetyltransferase (402 aa).

A compositionally biased stretch (polar residues) spans methionine 1 to threonine 17. Positions methionine 1–proline 39 are disordered. Positions asparagine 78–glutamate 388 constitute an AB hydrolase-1 domain. Catalysis depends on serine 183, which acts as the Nucleophile. Arginine 255 provides a ligand contact to substrate. Catalysis depends on residues aspartate 349 and histidine 382. Residue aspartate 383 participates in substrate binding.

The protein belongs to the AB hydrolase superfamily. MetX family. In terms of assembly, homodimer.

The protein resides in the cytoplasm. The catalysed reaction is L-homoserine + acetyl-CoA = O-acetyl-L-homoserine + CoA. It functions in the pathway amino-acid biosynthesis; L-methionine biosynthesis via de novo pathway; O-acetyl-L-homoserine from L-homoserine: step 1/1. In terms of biological role, transfers an acetyl group from acetyl-CoA to L-homoserine, forming acetyl-L-homoserine. The sequence is that of Homoserine O-acetyltransferase from Leifsonia xyli subsp. xyli (strain CTCB07).